Here is a 122-residue protein sequence, read N- to C-terminus: Small ribosomal subunit protein uS13 (122 aa).

The tract at residues 93–122 is disordered; sequence RLSLPVRGQRTKTNSRTRKGKRKTVAGKKK. The segment covering 101–122 has biased composition (basic residues); the sequence is QRTKTNSRTRKGKRKTVAGKKK.

This sequence belongs to the universal ribosomal protein uS13 family. Part of the 30S ribosomal subunit. Forms a loose heterodimer with protein S19. Forms two bridges to the 50S subunit in the 70S ribosome.

Located at the top of the head of the 30S subunit, it contacts several helices of the 16S rRNA. In the 70S ribosome it contacts the 23S rRNA (bridge B1a) and protein L5 of the 50S subunit (bridge B1b), connecting the 2 subunits; these bridges are implicated in subunit movement. Contacts the tRNAs in the A and P-sites. The protein is Small ribosomal subunit protein uS13 of Chlamydia abortus (strain DSM 27085 / S26/3) (Chlamydophila abortus).